The sequence spans 411 residues: Acetylornithine aminotransferase (411 aa).

Pyridoxal 5'-phosphate is bound by residues 107–108 (GT) and Phe-141. A N(2)-acetyl-L-ornithine-binding site is contributed by Arg-144. 227-230 (DEIQ) is a pyridoxal 5'-phosphate binding site. Lys-256 bears the N6-(pyridoxal phosphate)lysine mark. Residue Thr-284 coordinates N(2)-acetyl-L-ornithine. Residue Thr-285 coordinates pyridoxal 5'-phosphate.

The protein belongs to the class-III pyridoxal-phosphate-dependent aminotransferase family. ArgD subfamily. As to quaternary structure, homodimer. It depends on pyridoxal 5'-phosphate as a cofactor.

The protein resides in the cytoplasm. It carries out the reaction N(2)-acetyl-L-ornithine + 2-oxoglutarate = N-acetyl-L-glutamate 5-semialdehyde + L-glutamate. It participates in amino-acid biosynthesis; L-arginine biosynthesis; N(2)-acetyl-L-ornithine from L-glutamate: step 4/4. This is Acetylornithine aminotransferase from Xylella fastidiosa (strain 9a5c).